A 180-amino-acid polypeptide reads, in one-letter code: MSTNAIAKRYAKALVQLGSEAGTVDSFNTELDRFSALLTESRDLSAVFANPAYGIESKREVMKELVAKLQLSPMISNLLMLLLERGRISVLPEISQSYGAFADELSGVIRPTLSSGLPLEAGQIEEIRSALAKSTGKKVELKVEVDPSLIGGVVTKIGGKVFDGSVRTQLARIQDILQKG.

The protein belongs to the ATPase delta chain family. In terms of assembly, F-type ATPases have 2 components, F(1) - the catalytic core - and F(0) - the membrane proton channel. F(1) has five subunits: alpha(3), beta(3), gamma(1), delta(1), epsilon(1). F(0) has three main subunits: a(1), b(2) and c(10-14). The alpha and beta chains form an alternating ring which encloses part of the gamma chain. F(1) is attached to F(0) by a central stalk formed by the gamma and epsilon chains, while a peripheral stalk is formed by the delta and b chains.

The protein localises to the cell inner membrane. F(1)F(0) ATP synthase produces ATP from ADP in the presence of a proton or sodium gradient. F-type ATPases consist of two structural domains, F(1) containing the extramembraneous catalytic core and F(0) containing the membrane proton channel, linked together by a central stalk and a peripheral stalk. During catalysis, ATP synthesis in the catalytic domain of F(1) is coupled via a rotary mechanism of the central stalk subunits to proton translocation. Functionally, this protein is part of the stalk that links CF(0) to CF(1). It either transmits conformational changes from CF(0) to CF(1) or is implicated in proton conduction. This chain is ATP synthase subunit delta, found in Geobacter sp. (strain M21).